A 430-amino-acid polypeptide reads, in one-letter code: Enolase (430 aa).

Glutamine 163 serves as a coordination point for (2R)-2-phosphoglycerate. Glutamate 205 (proton donor) is an active-site residue. Mg(2+) contacts are provided by aspartate 242, glutamate 286, and aspartate 313. (2R)-2-phosphoglycerate is bound by residues lysine 338, arginine 367, serine 368, and lysine 389. The active-site Proton acceptor is the lysine 338.

It belongs to the enolase family. The cofactor is Mg(2+).

It localises to the cytoplasm. The protein resides in the secreted. Its subcellular location is the cell surface. The enzyme catalyses (2R)-2-phosphoglycerate = phosphoenolpyruvate + H2O. Its pathway is carbohydrate degradation; glycolysis; pyruvate from D-glyceraldehyde 3-phosphate: step 4/5. In terms of biological role, catalyzes the reversible conversion of 2-phosphoglycerate (2-PG) into phosphoenolpyruvate (PEP). It is essential for the degradation of carbohydrates via glycolysis. This chain is Enolase, found in Symbiobacterium thermophilum (strain DSM 24528 / JCM 14929 / IAM 14863 / T).